The chain runs to 326 residues: Phosphate acyltransferase (326 aa).

It belongs to the PlsX family. In terms of assembly, homodimer. Probably interacts with PlsY.

The protein localises to the cytoplasm. The catalysed reaction is a fatty acyl-[ACP] + phosphate = an acyl phosphate + holo-[ACP]. It functions in the pathway lipid metabolism; phospholipid metabolism. In terms of biological role, catalyzes the reversible formation of acyl-phosphate (acyl-PO(4)) from acyl-[acyl-carrier-protein] (acyl-ACP). This enzyme utilizes acyl-ACP as fatty acyl donor, but not acyl-CoA. The chain is Phosphate acyltransferase from Petrotoga mobilis (strain DSM 10674 / SJ95).